The chain runs to 119 residues: Integration host factor subunit beta (119 aa).

Positions 93–119 are disordered; the sequence is AGGLADTQPDGDAPDQPQPTLLGLHAM. Residues 97 to 112 are compositionally biased toward low complexity; that stretch reads ADTQPDGDAPDQPQPT.

It belongs to the bacterial histone-like protein family. Heterodimer of an alpha and a beta chain.

In terms of biological role, this protein is one of the two subunits of integration host factor, a specific DNA-binding protein that functions in genetic recombination as well as in transcriptional and translational control. The chain is Integration host factor subunit beta from Bordetella petrii (strain ATCC BAA-461 / DSM 12804 / CCUG 43448).